We begin with the raw amino-acid sequence, 285 residues long: NAD kinase (285 aa).

Asp64 (proton acceptor) is an active-site residue. Residues 64–65 (DG), 140–141 (ND), Arg151, Arg168, Asp170, and 181–186 (TGYNLS) contribute to the NAD(+) site.

This sequence belongs to the NAD kinase family. A divalent metal cation serves as cofactor.

It localises to the cytoplasm. It carries out the reaction NAD(+) + ATP = ADP + NADP(+) + H(+). Its function is as follows. Involved in the regulation of the intracellular balance of NAD and NADP, and is a key enzyme in the biosynthesis of NADP. Catalyzes specifically the phosphorylation on 2'-hydroxyl of the adenosine moiety of NAD to yield NADP. The protein is NAD kinase of Lachnoclostridium phytofermentans (strain ATCC 700394 / DSM 18823 / ISDg) (Clostridium phytofermentans).